Consider the following 425-residue polypeptide: Serine hydroxymethyltransferase (425 aa).

Residues L124 and 128–130 (GHL) each bind (6S)-5,6,7,8-tetrahydrofolate. The residue at position 233 (K233) is an N6-(pyridoxal phosphate)lysine.

The protein belongs to the SHMT family. As to quaternary structure, homodimer. Pyridoxal 5'-phosphate serves as cofactor.

It localises to the cytoplasm. The catalysed reaction is (6R)-5,10-methylene-5,6,7,8-tetrahydrofolate + glycine + H2O = (6S)-5,6,7,8-tetrahydrofolate + L-serine. It participates in one-carbon metabolism; tetrahydrofolate interconversion. Its pathway is amino-acid biosynthesis; glycine biosynthesis; glycine from L-serine: step 1/1. Its function is as follows. Catalyzes the reversible interconversion of serine and glycine with tetrahydrofolate (THF) serving as the one-carbon carrier. This reaction serves as the major source of one-carbon groups required for the biosynthesis of purines, thymidylate, methionine, and other important biomolecules. Also exhibits THF-independent aldolase activity toward beta-hydroxyamino acids, producing glycine and aldehydes, via a retro-aldol mechanism. This is Serine hydroxymethyltransferase from Clavibacter michiganensis subsp. michiganensis (strain NCPPB 382).